The sequence spans 481 residues: 3-isopropylmalate dehydratase large subunit (481 aa).

The [4Fe-4S] cluster site is built by Cys-357, Cys-417, and Cys-420. Residues 429 to 441 (SPGQRCASTSNRN) are compositionally biased toward polar residues. Residues 429 to 451 (SPGQRCASTSNRNFEGRQGKGGR) are disordered.

It belongs to the aconitase/IPM isomerase family. LeuC type 1 subfamily. As to quaternary structure, heterodimer of LeuC and LeuD. It depends on [4Fe-4S] cluster as a cofactor.

The enzyme catalyses (2R,3S)-3-isopropylmalate = (2S)-2-isopropylmalate. Its pathway is amino-acid biosynthesis; L-leucine biosynthesis; L-leucine from 3-methyl-2-oxobutanoate: step 2/4. Its function is as follows. Catalyzes the isomerization between 2-isopropylmalate and 3-isopropylmalate, via the formation of 2-isopropylmaleate. The protein is 3-isopropylmalate dehydratase large subunit of Mycobacterium sp. (strain KMS).